A 412-amino-acid polypeptide reads, in one-letter code: Argininosuccinate synthase (412 aa).

ATP contacts are provided by residues 16–24 (AYSGGLDTS) and alanine 44. L-citrulline contacts are provided by tyrosine 96 and serine 101. Glycine 126 serves as a coordination point for ATP. Threonine 128, asparagine 132, and aspartate 133 together coordinate L-aspartate. Asparagine 132 contributes to the L-citrulline binding site. Residues arginine 136, serine 185, serine 194, glutamate 270, and tyrosine 282 each coordinate L-citrulline.

Belongs to the argininosuccinate synthase family. Type 1 subfamily. Homotetramer.

The protein resides in the cytoplasm. The catalysed reaction is L-citrulline + L-aspartate + ATP = 2-(N(omega)-L-arginino)succinate + AMP + diphosphate + H(+). Its pathway is amino-acid biosynthesis; L-arginine biosynthesis; L-arginine from L-ornithine and carbamoyl phosphate: step 2/3. This chain is Argininosuccinate synthase, found in Shewanella baltica (strain OS195).